We begin with the raw amino-acid sequence, 418 residues long: Perilipin-1 homolog (418 aa).

A required for lipid droplet localization region spans residues 211 to 275; sequence LTIGQRVKNL…EKKTWVIEKS (65 aa).

Belongs to the perilipin family. As to expression, expressed in intestinal and epidermal cells. Expressed in the muscle and hypodermis.

The protein localises to the lipid droplet. Lipid droplet-associated protein which plays a role in lipid droplet clustering. In Caenorhabditis elegans, this protein is Perilipin-1 homolog.